Reading from the N-terminus, the 226-residue chain is Cytochrome c oxidase subunit 2 (226 aa).

The Mitochondrial intermembrane segment spans residues 1–14 (MAYPLQLGLQDATS). Residues 15–45 (PIMEELTSFHDHTLMIVFLISTLVLYIISLM) form a helical membrane-spanning segment. The Mitochondrial matrix segment spans residues 46–59 (LTTKLTHTSTMDAQ). The helical transmembrane segment at 60-87 (EIETIWTILPAIILIMIALPSLRVLYMM) threads the bilayer. Topologically, residues 88-226 (DEINNPALTV…KYFEAWSASM (139 aa)) are mitochondrial intermembrane. His161, Cys196, Glu198, Cys200, His204, and Met207 together coordinate Cu cation. Glu198 is a Mg(2+) binding site. The residue at position 218 (Tyr218) is a Phosphotyrosine.

The protein belongs to the cytochrome c oxidase subunit 2 family. Component of the cytochrome c oxidase (complex IV, CIV), a multisubunit enzyme composed of 14 subunits. The complex is composed of a catalytic core of 3 subunits MT-CO1, MT-CO2 and MT-CO3, encoded in the mitochondrial DNA, and 11 supernumerary subunits COX4I, COX5A, COX5B, COX6A, COX6B, COX6C, COX7A, COX7B, COX7C, COX8 and NDUFA4, which are encoded in the nuclear genome. The complex exists as a monomer or a dimer and forms supercomplexes (SCs) in the inner mitochondrial membrane with NADH-ubiquinone oxidoreductase (complex I, CI) and ubiquinol-cytochrome c oxidoreductase (cytochrome b-c1 complex, complex III, CIII), resulting in different assemblies (supercomplex SCI(1)III(2)IV(1) and megacomplex MCI(2)III(2)IV(2)). Found in a complex with TMEM177, COA6, COX18, COX20, SCO1 and SCO2. Interacts with TMEM177 in a COX20-dependent manner. Interacts with COX20. Interacts with COX16. It depends on Cu cation as a cofactor.

The protein localises to the mitochondrion inner membrane. The enzyme catalyses 4 Fe(II)-[cytochrome c] + O2 + 8 H(+)(in) = 4 Fe(III)-[cytochrome c] + 2 H2O + 4 H(+)(out). Functionally, component of the cytochrome c oxidase, the last enzyme in the mitochondrial electron transport chain which drives oxidative phosphorylation. The respiratory chain contains 3 multisubunit complexes succinate dehydrogenase (complex II, CII), ubiquinol-cytochrome c oxidoreductase (cytochrome b-c1 complex, complex III, CIII) and cytochrome c oxidase (complex IV, CIV), that cooperate to transfer electrons derived from NADH and succinate to molecular oxygen, creating an electrochemical gradient over the inner membrane that drives transmembrane transport and the ATP synthase. Cytochrome c oxidase is the component of the respiratory chain that catalyzes the reduction of oxygen to water. Electrons originating from reduced cytochrome c in the intermembrane space (IMS) are transferred via the dinuclear copper A center (CU(A)) of subunit 2 and heme A of subunit 1 to the active site in subunit 1, a binuclear center (BNC) formed by heme A3 and copper B (CU(B)). The BNC reduces molecular oxygen to 2 water molecules using 4 electrons from cytochrome c in the IMS and 4 protons from the mitochondrial matrix. The sequence is that of Cytochrome c oxidase subunit 2 (MT-CO2) from Perognathus flavus (Silky pocket mouse).